A 138-amino-acid chain; its full sequence is Extracellular glycoprotein lacritin (138 aa).

Residues 1–19 (MKFTTLLFLAAVAGALVYA) form the signal peptide. Residues 20–79 (EDASSDSTGADPAQEAGTSKPNEEISGPAEPASPPETTTTAQETSAAAVQGTAKVTSSRQ) are disordered. Over residues 43–67 (EISGPAEPASPPETTTTAQETSAAA) the composition is skewed to low complexity. Residue Asn119 is glycosylated (N-linked (GlcNAc...) asparagine).

As to expression, expressed in secretory granules of many acinar cells in lacrimal gland and in scattered acinar cells of salivary glands.

The protein localises to the secreted. Its function is as follows. Modulates secretion by lacrimal acinar cells. The polypeptide is Extracellular glycoprotein lacritin (LACRT) (Homo sapiens (Human)).